Consider the following 329-residue polypeptide: Pre-mRNA-splicing factor CWC24 (329 aa).

A disordered region spans residues 1–86; the sequence is MSEAPAPVVT…DGVGGGLDEF (86 aa). The segment covering 72 to 86 has biased composition (acidic residues); the sequence is NEEEEDGVGGGLDEF. Residues 177–205 form a C3H1-type zinc finger; that stretch reads DYQPDVCKDYKETGFCGYGDSCKFLHDRG. Residues 237-275 form an RING-type zinc finger; the sequence is CLICRQPFTQPVVTKCGHYFCMGCAAKRFQKSPKCYACG. Residues 298–308 show a composition bias toward basic and acidic residues; the sequence is ARREAREERAE. Positions 298-329 are disordered; the sequence is ARREAREERAEQTGGGGIEIGGGSDEEGSDEE. Residues 310–320 show a composition bias toward gly residues; it reads TGGGGIEIGGG.

The protein belongs to the CWC24 family. Associated with the spliceosome.

Its subcellular location is the nucleus. In terms of biological role, involved in pre-mRNA splicing. In Cryptococcus neoformans var. neoformans serotype D (strain B-3501A) (Filobasidiella neoformans), this protein is Pre-mRNA-splicing factor CWC24 (CWC24).